A 227-amino-acid chain; its full sequence is Large ribosomal subunit protein uL1 (227 aa).

Belongs to the universal ribosomal protein uL1 family. Part of the 50S ribosomal subunit.

Binds directly to 23S rRNA. The L1 stalk is quite mobile in the ribosome, and is involved in E site tRNA release. Its function is as follows. Protein L1 is also a translational repressor protein, it controls the translation of the L11 operon by binding to its mRNA. This Mesoplasma florum (strain ATCC 33453 / NBRC 100688 / NCTC 11704 / L1) (Acholeplasma florum) protein is Large ribosomal subunit protein uL1.